Consider the following 137-residue polypeptide: Phospholipase A2 homolog PLA2-03 (137 aa).

The first 16 residues, 1–16 (MRTLWIVAVLLVGVEG), serve as a signal peptide directing secretion. Cystine bridges form between C42–C131, C44–C60, C59–C111, C65–C137, C66–C104, C73–C97, and C91–C102. The interval 121–133 (KKYKIFPKFLCKK) is important for membrane-damaging activities in eukaryotes and bacteria; heparin-binding.

Belongs to the phospholipase A2 family. Group II subfamily. K49 sub-subfamily. In terms of tissue distribution, expressed by the venom gland.

The protein localises to the secreted. Snake venom phospholipase A2 homolog that lacks enzymatic activity. Is myotoxic and displays edema-inducing activities in mouse paw. A model of myotoxic mechanism has been proposed: an apo Lys49-PLA2 is activated by the entrance of a hydrophobic molecule (e.g. fatty acid) at the hydrophobic channel of the protein leading to a reorientation of a monomer. This reorientation causes a transition between 'inactive' to 'active' states, causing alignment of C-terminal and membrane-docking sites (MDoS) side-by-side and putting the membrane-disruption sites (MDiS) in the same plane, exposed to solvent and in a symmetric position for both monomers. The MDoS region stabilizes the toxin on membrane by the interaction of charged residues with phospholipid head groups. Subsequently, the MDiS region destabilizes the membrane with penetration of hydrophobic residues. This insertion causes a disorganization of the membrane, allowing an uncontrolled influx of ions (i.e. calcium and sodium), and eventually triggering irreversible intracellular alterations and cell death. The protein is Phospholipase A2 homolog PLA2-03 of Ovophis okinavensis (Ryukyu Island pit viper).